The following is a 228-amino-acid chain: Cytidylate kinase (228 aa).

17 to 25 (GPTASGKGT) contributes to the ATP binding site.

Belongs to the cytidylate kinase family. Type 1 subfamily.

The protein resides in the cytoplasm. It carries out the reaction CMP + ATP = CDP + ADP. The catalysed reaction is dCMP + ATP = dCDP + ADP. The protein is Cytidylate kinase of Burkholderia cenocepacia (strain HI2424).